A 213-amino-acid polypeptide reads, in one-letter code: Ribonuclease HII (213 aa).

One can recognise an RNase H type-2 domain in the interval 2-213 (GRVAGIDEAG…KEWATWKRLR (212 aa)). 3 residues coordinate a divalent metal cation: aspartate 8, glutamate 9, and aspartate 113.

It belongs to the RNase HII family. Mn(2+) serves as cofactor. It depends on Mg(2+) as a cofactor.

Its subcellular location is the cytoplasm. It catalyses the reaction Endonucleolytic cleavage to 5'-phosphomonoester.. Endonuclease that specifically degrades the RNA of RNA-DNA hybrids. In Thermofilum pendens (strain DSM 2475 / Hrk 5), this protein is Ribonuclease HII.